The chain runs to 1029 residues: Multidrug resistance protein MdtC (1029 aa).

Transmembrane regions (helical) follow at residues 15–35 (ILLS…LPVA), 333–353 (EVEQ…FLFL), 360–380 (LIPA…MYLC), 387–407 (LSLM…IVAL), 431–451 (VGFT…PLLL), 469–489 (VAIG…CGWL), 528–548 (LVGL…ISIP), 853–873 (VILI…LYES), 897–917 (AFDA…IGIV), 953–973 (PIMM…IASG), and 984–1004 (ITIV…TPVV).

The protein belongs to the resistance-nodulation-cell division (RND) (TC 2.A.6) family. MdtC subfamily. As to quaternary structure, part of a tripartite efflux system composed of MdtA, MdtB and MdtC. MdtC forms a heteromultimer with MdtB.

It is found in the cell inner membrane. The chain is Multidrug resistance protein MdtC from Cronobacter sakazakii (strain ATCC BAA-894) (Enterobacter sakazakii).